The primary structure comprises 1262 residues: Collagen alpha-1(III) chain (1262 aa).

Residues 1 to 23 (MMSFVQKVSLFILAVFQPSVILA) form the signal peptide. Residues 24-150 (QQDALGGCTH…PSISGGSFSP (127 aa)) constitute a propeptide, N-terminal propeptide. A VWFC domain is found at 29–88 (GGCTHLGQEYADRDVWKPEPCQICVCDSGSVLCDDIICDDQELDCPNPEIPLGECCPVCP). 2 disordered regions span residues 95-143 (TELP…CPSI) and 160-1000 (GSVG…GGVA). Residues 102–118 (GPKGDPGSPGSPGRTGA) show a composition bias toward low complexity. Over residues 119 to 134 (PGPPGQPGSPGAPGPP) the composition is skewed to pro residues. The nonhelical region (N-terminal) stretch occupies residues 145–164 (GGSFSPQYDSYDVKAGSVGM). The interval 165–994 (GYPPQPISGF…PGPSGPPGPC (830 aa)) is triple-helical region. The span at 167–190 (PPQPISGFPGPPGPSGPPGPPGHA) shows a compositional bias: pro residues. The segment covering 192–201 (PPGSNGYQGP) has biased composition (low complexity). Positions 202–216 (PGEPGQPGPSGPPGP) are enriched in pro residues. The span at 228–240 (KDGEPGRPGRNGD) shows a compositional bias: basic and acidic residues. The span at 253-264 (PGMPGMPGMKGA) shows a compositional bias: low complexity. Residue Lys262 is modified to 5-hydroxylysine. The segment covering 265–274 (RGFDGKDGAK) has biased composition (basic and acidic residues). Composition is skewed to low complexity over residues 276-295 (DSGA…NGSP) and 339-376 (TAGF…QGQA). Lys283 bears the 5-hydroxylysine mark. Residues 389–414 (GSPGGKGEMGPSGIPGGPGPPGGRGL) show a composition bias toward gly residues. Composition is skewed to low complexity over residues 534-549 (MRGL…SDGK) and 631-640 (PGPSGSPGLQ). A compositionally biased stretch (gly residues) spans 641-650 (GLPGGPGPAG). A compositionally biased stretch (low complexity) spans 672-684 (PKGENGIPGERGP). The segment covering 692-701 (GARGGPGPAG) has biased composition (gly residues). 4 stretches are compositionally biased toward low complexity: residues 723–738 (LQGM…SPGP), 781–790 (TGPAGAPGPA), 802–817 (QGLP…PGQN), and 828–838 (PPGLRGEAGPP). Residue Lys859 is modified to 5-hydroxylysine. A compositionally biased stretch (gly residues) spans 863-872 (GSPGGPGAAG). The segment covering 895–904 (PGVPGPPGHP) has biased composition (pro residues). A compositionally biased stretch (low complexity) spans 927-940 (PQGAIGSPGASGAR). A compositionally biased stretch (pro residues) spans 976–993 (AGPPGQPGLPGPSGPPGP). The interval 995-1003 (CGGGVASLG) is nonhelical region (C-terminal). Residues 1018 to 1262 (DEPKENEINL…GVDVGPVCFL (245 aa)) constitute a propeptide, C-terminal propeptide. The 235-residue stretch at 1028-1262 (GEIMSSMKSI…GVDVGPVCFL (235 aa)) folds into the Fibrillar collagen NC1 domain. 3 cysteine pairs are disulfide-bonded: Cys1058–Cys1090, Cys1098–Cys1260, and Cys1168–Cys1213. Ca(2+) is bound by residues Asp1076, Asn1078, Gln1079, Cys1081, and Asp1084. Asn1163 is a glycosylation site (N-linked (GlcNAc...) asparagine).

The protein belongs to the fibrillar collagen family. In terms of assembly, trimers of identical alpha 1(III) chains. The chains are linked to each other by interchain disulfide bonds. Trimers are also cross-linked via hydroxylysines. Prolines at the third position of the tripeptide repeating unit (G-X-Y) are hydroxylated in some or all of the chains.

It localises to the secreted. It is found in the extracellular space. The protein resides in the extracellular matrix. In terms of biological role, collagen type III occurs in most soft connective tissues along with type I collagen. This chain is Collagen alpha-1(III) chain (COL3A1), found in Gallus gallus (Chicken).